The chain runs to 82 residues: Bowman-Birk type proteinase inhibitor (82 aa).

The interval 1–24 (SGHHDETTDEPSESSKPCCDQCSC) is disordered. 7 disulfides stabilise this stretch: Cys-18-Cys-72, Cys-19-Cys-34, Cys-22-Cys-68, Cys-24-Cys-32, Cys-42-Cys-49, Cys-46-Cys-61, and Cys-51-Cys-59.

The protein belongs to the Bowman-Birk serine protease inhibitor family.

Its function is as follows. Trypsin and chymotrypsin are inhibited simultaneously. There are two separate reactive sites for trypsin and chymotrypsin but they do not inhibit simultaneously. The chain is Bowman-Birk type proteinase inhibitor from Phaseolus angularis (Azuki bean).